Reading from the N-terminus, the 665-residue chain is Transketolase (665 aa).

His26 provides a ligand contact to substrate. Residues His66 and 114–116 each bind thiamine diphosphate; that span reads GPL. The interval 94–114 is disordered; sequence NSKTPGHPETGETPGVETTTG. Low complexity predominate over residues 97–114; it reads TPGHPETGETPGVETTTG. Mg(2+) is bound at residue Asp155. Thiamine diphosphate is bound by residues Gly156 and Asn185. 2 residues coordinate Mg(2+): Asn185 and Ile187. Residues His261, Arg358, and Ser385 each contribute to the substrate site. Residue His261 participates in thiamine diphosphate binding. Catalysis depends on Glu411, which acts as the Proton donor. Phe437 provides a ligand contact to thiamine diphosphate. His461, Asp469, and Arg520 together coordinate substrate.

Belongs to the transketolase family. As to quaternary structure, homodimer. Mg(2+) is required as a cofactor. The cofactor is Ca(2+). Mn(2+) serves as cofactor. Requires Co(2+) as cofactor. It depends on thiamine diphosphate as a cofactor.

The enzyme catalyses D-sedoheptulose 7-phosphate + D-glyceraldehyde 3-phosphate = aldehydo-D-ribose 5-phosphate + D-xylulose 5-phosphate. Functionally, catalyzes the transfer of a two-carbon ketol group from a ketose donor to an aldose acceptor, via a covalent intermediate with the cofactor thiamine pyrophosphate. The protein is Transketolase (tkt) of Buchnera aphidicola subsp. Acyrthosiphon pisum (strain APS) (Acyrthosiphon pisum symbiotic bacterium).